The chain runs to 681 residues: Envelope glycoprotein (681 aa).

An N-terminal signal peptide occupies residues 1-18 (MKTIYFLISLILIQSIKT). Residues 19–648 (LPVLEIASNS…GLGGKWWTSD (630 aa)) are Extracellular-facing. The receptor-binding stretch occupies residues 38–188 (SGTLQKTEDV…FSRQGQGYRH (151 aa)). N-linked (GlcNAc...) asparagine; by host glycosylation is found at Asn-94, Asn-171, Asn-190, Asn-202, Asn-207, Asn-219, and Asn-223. The interval 223-428 (NQTCPPSLKP…PDSSPTTRPP (206 aa)) is disordered. Composition is skewed to polar residues over residues 236-260 (PTVTPSIHSTNTQINTAKSGTMNPS) and 278-315 (PHTTLNVVTEQKQSSTILSTPSLHPSTSQHEQNSTNPS). The tract at residues 277 to 455 (GPHTTLNVVT…PFLDGLINTE (179 aa)) is mucin-like region. N-linked (GlcNAc...) asparagine; by host glycans are attached at residues Asn-310, Asn-323, Asn-336, Asn-350, Asn-360, Asn-364, Asn-381, Asn-397, Asn-475, and Asn-487. Residues 327–347 (PTTQPATLLNNTNTTPTYNTL) are compositionally biased toward low complexity. Polar residues-rich tracts occupy residues 348–365 (KYNLSTPSPPTRNITNND) and 373–394 (SEQTNAQLNTTLDPTENPTTGQ). A compositionally biased stretch (low complexity) spans 395–428 (DTNSTTNIIMTTSDITSKHPTNSSPDSSPTTRPP). The fusion peptide stretch occupies residues 529-549 (GLSWIPFFGPGIEGLYTAGLI). Residues Asn-564 and Asn-619 are each glycosylated (N-linked (GlcNAc...) asparagine; by host). A helical transmembrane segment spans residues 649–669 (WGVLTNLGILLLLSIAVLIAL). At 670–681 (SCICRIFTKYIG) the chain is on the cytoplasmic side. 2 S-palmitoyl cysteine; by host lipidation sites follow: Cys-671 and Cys-673.

This sequence belongs to the filoviruses glycoprotein family. Homotrimer; each monomer consists of a GP1 and a GP2 subunit linked by disulfide bonds. The resulting peplomers (GP1,2) protrude from the virus surface as spikes. GP1,2 interacts with human CD209 and CLEC4M (collectively referred to as DC-SIGN(R)). Asialoglycoprotein receptor (ASGP-R) may be a liver-specific receptor for GP1,2. Members of the Tyro3 receptor tyrosine kinase family may be cell entry factors interacting with GP1,2. In terms of processing, N-glycosylated. Post-translationally, O-glycosylated in the mucin-like region. Specific enzymatic cleavages in vivo yield mature proteins. The precursor is processed into GP1 and GP2 by host cell furin in the trans Golgi, and maybe by other host proteases, to yield the mature GP1 and GP2 proteins. The cleavage site corresponds to the furin optimal cleavage sequence [KR]-X-[KR]-R. In terms of processing, GP1 is phosphorylated on serine residues between residues 260 and 273.

The protein localises to the virion membrane. It localises to the host cell membrane. GP1 is responsible for binding to the receptor(s) on target cells. Interacts with CD209/DC-SIGN and CLEC4M/DC-SIGNR which act as cofactors for virus entry into the host cell. Binding to CD209 and CLEC4M, which are respectively found on dendritic cells (DCs), and on endothelial cells of liver sinusoids and lymph node sinuses, facilitate infection of macrophages and endothelial cells. These interactions not only facilitate virus cell entry, but also allow capture of viral particles by DCs and subsequent transmission to susceptible cells without DCs infection (trans infection). Its function is as follows. GP2 acts as a class I viral fusion protein. Under the current model, the protein has at least 3 conformational states: pre-fusion native state, pre-hairpin intermediate state, and post-fusion hairpin state. During viral and target cell membrane fusion, the coiled coil regions (heptad repeats) assume a trimer-of-hairpins structure, positioning the fusion peptide in close proximity to the C-terminal region of the ectodomain. The formation of this structure appears to drive apposition and subsequent fusion of viral and target cell membranes. Responsible for penetration of the virus into the cell cytoplasm by mediating the fusion of the membrane of the endocytosed virus particle with the endosomal membrane. Low pH in endosomes induces an irreversible conformational change in GP2, releasing the fusion hydrophobic peptide. This chain is Envelope glycoprotein (GP), found in Chlorocebus aethiops (Green monkey).